The primary structure comprises 351 residues: Photosystem II D2 protein (351 aa).

Residues 39 to 59 (CAYLALGAWFTGTTFVSSWYT) traverse the membrane as a helical segment. His-116 is a chlorophyll a binding site. The chain crosses the membrane as a helical span at residues 123–139 (GFCLRQFEIARLVGLRP). Pheophytin a contacts are provided by Gln-128 and Asn-141. A helical membrane pass occupies residues 151–164 (VFVSVFLLYPLGQA). His-196 contacts chlorophyll a. A helical membrane pass occupies residues 206 to 226 (GALLCAIHGATVENTLFEDGE). Positions 213 and 260 each coordinate a plastoquinone. A Fe cation-binding site is contributed by His-213. Position 267 (His-267) interacts with Fe cation. A helical transmembrane segment spans residues 277–293 (GLWVSSIGIVGLALNLR).

The protein belongs to the reaction center PufL/M/PsbA/D family. PSII is composed of 1 copy each of membrane proteins PsbA, PsbB, PsbC, PsbD, PsbE, PsbF, PsbH, PsbI, PsbJ, PsbK, PsbL, PsbM, PsbT, PsbY, PsbZ, Psb30/Ycf12, at least 3 peripheral proteins of the oxygen-evolving complex and a large number of cofactors. It forms dimeric complexes. Requires The D1/D2 heterodimer binds P680, chlorophylls that are the primary electron donor of PSII, and subsequent electron acceptors. It shares a non-heme iron and each subunit binds pheophytin, quinone, additional chlorophylls, carotenoids and lipids. There is also a Cl(-1) ion associated with D1 and D2, which is required for oxygen evolution. The PSII complex binds additional chlorophylls, carotenoids and specific lipids. as cofactor.

The protein resides in the plastid. It localises to the chloroplast thylakoid membrane. The enzyme catalyses 2 a plastoquinone + 4 hnu + 2 H2O = 2 a plastoquinol + O2. Its function is as follows. Photosystem II (PSII) is a light-driven water:plastoquinone oxidoreductase that uses light energy to abstract electrons from H(2)O, generating O(2) and a proton gradient subsequently used for ATP formation. It consists of a core antenna complex that captures photons, and an electron transfer chain that converts photonic excitation into a charge separation. The D1/D2 (PsbA/PsbD) reaction center heterodimer binds P680, the primary electron donor of PSII as well as several subsequent electron acceptors. D2 is needed for assembly of a stable PSII complex. This Cyanidium caldarium (Red alga) protein is Photosystem II D2 protein.